A 558-amino-acid chain; its full sequence is Methionine--tRNA ligase 1 (558 aa).

A 'HIGH' region motif is present at residues 10–20 (PYINGIKHLGN). Positions 142, 145, 155, and 158 each coordinate Zn(2+). The 'KMSKS' region motif lies at 332-336 (KFSTS). T335 serves as a coordination point for ATP.

This sequence belongs to the class-I aminoacyl-tRNA synthetase family. MetG type 1 subfamily. As to quaternary structure, monomer. Requires Zn(2+) as cofactor.

It localises to the cytoplasm. The enzyme catalyses tRNA(Met) + L-methionine + ATP = L-methionyl-tRNA(Met) + AMP + diphosphate. Its function is as follows. Is required not only for elongation of protein synthesis but also for the initiation of all mRNA translation through initiator tRNA(fMet) aminoacylation. This chain is Methionine--tRNA ligase 1, found in Acaryochloris marina (strain MBIC 11017).